The following is a 425-amino-acid chain: MHDIDFIKNNPELFDEAMQNRNFGKIAHKIIELSANKKHTLTQLYSLQKERNNITQEIEKLKKDNIQCDTQIELSKEITKKINHINNMIKTDSELIDLLNILPNIPDKKVPIGKDENDNIEIRRYGKKVDFKFPPKTHYELGENLNLMDFKQAAKLSGSRFVILKSQLAQLDRALANFMLDVHTQEFGYSEISHPVLVHESAMYGVGQLPKFADDSFKTTDNFRLIPTSEVALTNLVSNANINANELPIRLTACSQCFRSEAGSAGKDVRGMMRQHQFNKVELVSIVTEEQSELELERMTQVAEEILKKLELPYRVMMLCTGDLGFSASITYDIEVWIPSQNQYREISSCSNCKAFQARRMNAKYHTISNGNKVNKFVHTLNGSALAIGRTIIAILENYQNQDGSITIPHVLRKYMNNQDIIKKQ.

228–230 (TSE) lines the L-serine pocket. 259 to 261 (RSE) serves as a coordination point for ATP. Glu-282 lines the L-serine pocket. An ATP-binding site is contributed by 346-349 (EISS). Residue Ser-384 participates in L-serine binding.

The protein belongs to the class-II aminoacyl-tRNA synthetase family. Type-1 seryl-tRNA synthetase subfamily. Homodimer. The tRNA molecule binds across the dimer.

It is found in the cytoplasm. The catalysed reaction is tRNA(Ser) + L-serine + ATP = L-seryl-tRNA(Ser) + AMP + diphosphate + H(+). The enzyme catalyses tRNA(Sec) + L-serine + ATP = L-seryl-tRNA(Sec) + AMP + diphosphate + H(+). Its pathway is aminoacyl-tRNA biosynthesis; selenocysteinyl-tRNA(Sec) biosynthesis; L-seryl-tRNA(Sec) from L-serine and tRNA(Sec): step 1/1. Its function is as follows. Catalyzes the attachment of serine to tRNA(Ser). Is also able to aminoacylate tRNA(Sec) with serine, to form the misacylated tRNA L-seryl-tRNA(Sec), which will be further converted into selenocysteinyl-tRNA(Sec). This chain is Serine--tRNA ligase, found in Ehrlichia ruminantium (strain Gardel).